The primary structure comprises 147 residues: Cilia- and flagella-associated protein 90 (147 aa).

A disordered region spans residues 1 to 36 (MEDDEEETTASTLRGKPRPPPVSAQSAFSYIPPRRL).

As to quaternary structure, microtubule inner protein component of sperm flagellar doublet microtubules.

It localises to the cytoplasm. The protein resides in the cytoskeleton. It is found in the cilium axoneme. The protein localises to the flagellum axoneme. Functionally, microtubule inner protein (MIP) part of the dynein-decorated doublet microtubules (DMTs) in cilia axoneme, which is required for motile cilia beating. The polypeptide is Cilia- and flagella-associated protein 90 (Homo sapiens (Human)).